Reading from the N-terminus, the 808-residue chain is Phospholipase D alpha 1 (808 aa).

Positions 1–30 (MAQISLHGTLHVTIYEVDKLHSGGGPHFFR) are excised as a propeptide. A C2 domain is found at 1–125 (MAQISLHGTL…LDGEEIDRWV (125 aa)). Residue D186 participates in Ca(2+) binding. The PLD phosphodiesterase 1 domain maps to 326 to 364 (TMFTHHQKIVVVDSAMPNGDSQRRRIVSFVGGLDLCDGR). Active-site residues include H331, K333, and D338. An a 1,2-diacyl-sn-glycero-3-phosphate-binding site is contributed by H331. Residues H370 and H404 each coordinate Ca(2+). A 1,2-diacyl-sn-glycero-3-phosphate-binding residues include Q520 and H659. The PLD phosphodiesterase 2 domain maps to 654–681 (FMIYVHTKMMIVDDEYIIIGSANINQRS). Active-site residues include H659, K661, and D666. E720 is a binding site for Ca(2+).

Belongs to the phospholipase D family. C2-PLD subfamily. It depends on Ca(2+) as a cofactor. In terms of tissue distribution, expression is higher in radicle than in endosperm.

It localises to the cytoplasm. The protein localises to the membrane. It is found in the vacuole. Its subcellular location is the endoplasmic reticulum. The protein resides in the plastid. It localises to the cell membrane. The catalysed reaction is a 1,2-diacyl-sn-glycero-3-phosphocholine + H2O = a 1,2-diacyl-sn-glycero-3-phosphate + choline + H(+). In terms of biological role, hydrolyzes glycerol-phospholipids at the terminal phosphodiesteric bond. Plays an important role in various cellular processes, including phytohormone action, vesicular trafficking, secretion, cytoskeletal arrangement, meiosis, tumor promotion, pathogenesis, membrane deterioration and senescence. In Ricinus communis (Castor bean), this protein is Phospholipase D alpha 1 (PLD1).